The sequence spans 464 residues: tRNA modification GTPase MnmE (464 aa).

(6S)-5-formyl-5,6,7,8-tetrahydrofolate-binding residues include R27, E90, and K129. One can recognise a TrmE-type G domain in the interval 222-384; it reads GVTLVLAGSV…LYDRIRSFIA (163 aa). GTP contacts are provided by residues 232–237, 251–257, and 276–279; these read NVGKSS, SSYAGTT, and DTAG. Residue S236 coordinates Mg(2+). Residue S251 coordinates K(+). Position 257 (T257) interacts with Mg(2+). K464 contributes to the (6S)-5-formyl-5,6,7,8-tetrahydrofolate binding site.

This sequence belongs to the TRAFAC class TrmE-Era-EngA-EngB-Septin-like GTPase superfamily. TrmE GTPase family. In terms of assembly, homodimer. Heterotetramer of two MnmE and two MnmG subunits. K(+) serves as cofactor.

It is found in the cytoplasm. Exhibits a very high intrinsic GTPase hydrolysis rate. Involved in the addition of a carboxymethylaminomethyl (cmnm) group at the wobble position (U34) of certain tRNAs, forming tRNA-cmnm(5)s(2)U34. The sequence is that of tRNA modification GTPase MnmE from Borrelia recurrentis (strain A1).